Reading from the N-terminus, the 2242-residue chain is MKVTQASCHQGDIARFGARAGNQCVCNGIMFLHALHLGGTSAVLQTEALDAIMEEGARLDARLERELQKKLPAGGRLPVYRLGDEVPRRLESRFGRTVHALSRPFNGTTETCDLDGYMCPGIFDFLRYAHAKPRPTYVLVTVNSLARAVVFTEDHMLVFDPHSSAECHNAAVYHCEGLHQVLMVLTGFGVQLSPAFYYEALFLYMLDVATVPEAEIAARLVSTYRDRDIDLTGVVRESADTAATTTTAAPSLPPLPDPIVDPGCPPGVAPSIPVYDPSSSPKKTPEKRRKDLSGSKHGGKKKPPSTTSKTLATASSSSPSAIAAASSSSAVPPSYSCGEGALPALGRYQQLVDEVEQELKALTLPPLPANTSAWTLHAAGTESGANAATATAPSFDEAFLTDRLQQLIIHAVNQRSCLRRPCGPQSAAQQAVRAYLGLSKKLDAFLLNWLHHGLDLRRMHDYLSHKTTKGTYSTLDRALLEKMQVVFDPYGRQHGPALIAWVEEMLRYVESKPTNELSQRLQRFVTKRPMPVSDSFVCLRPVDFQRLTQVIEQRRRVLQRQREEYHGVYEHLAGLITSIDIHDLDASDLNRREILKALQPLDDNAKQELFRLGNAKMLELQMDLDRLSTQLLTRVHNHILNGFLPVEDLKQMERVVEQVLRLFYDLRDLKLCDGSYEEGFVVIREQLSYLMTGTVRDNVPLLQEILQLRHAYQQATQQNEGRLTQIHDLLHVIETLVRDPGSRGSALTLALVQEQLAQLEALGGLQLPEVQQRLQNAQLALSRLYEEEEETQRFLDGLSYDDPPTEQTIKRHPQLREMLRRDEQTRLRLINAVLSMFHTLVMRLARDESPRPTFFDAVSLLLQQLPPDSHEREDLRAANATYAQMVKKLEQIEKAGTGASEKRFQALRELVYFFRNHEYFFQHMVGRLGVGPQVTELYERYQHEMEEQHLERLEREWQEEAGKLTVTSVEDVQRVLARAPSHRVMHQMQQTLTTKMQDFLDKEKRKQEEQQRQLLDGYQKKVQQDLQRVVDAVKGEMLSTIPHQPLEATLELLLGLDQRAQPLLDKFNQDLLSALQQLSKKLDGRINECLHGVLTGDVERRCHPHREAAMQTQASLNHLDQVLGPQLLIHETQQALQHAVHQAQFIEKCQQGDPTTAITGSEFESDFARYRSSQQKMEGQLQETRQQMTETSERLDRSLRQDPGSSSVTRVPEKPFKGQELAGRITPPPVDFQRPVFKTLLDQQADAARKALSDEADLLNQKVQTQLRQRDEQLSTAQNLWTDLVTRHKMSGGLDVTTPDAKALMEKPLETLRELLGKATQQLPYLSAERTVRWMLAFLEEALAQITADPTHPHHGSRTHYRNLQQQAVESAVTLAHQIEQNAACENFIAQHQEATANGASTPRVDMVQAVEAVWQRLEPGRVAGGAARHQKVQELLQRLGQTLGDLELQETLATEYFALLHGIQTFSYGLDFRSQLEKIRDLRTRFAELAKRRGTRLSNEGALPNPRKPQATTSLGAFTRGLNALERHVQLGHQYLLNKLNGSSLVYRLEDIPSVLPPTHETDPALIMRDRLRRLCFARHHDTFLEVVDVFGMRQIVTQAGEPIHLVTDYGNVAFKYLALRDDGRPLAWRRRCSGGGLKNVVTTRYKAITVAVAVCQTLRTFWPQISQYDLRPYLTQHQSHTHPAETHTLHNLKLFCYLVSTAWHQRIDTQQELTAADRVGSGEGGDVGEQRPGRGTVLRLSLQEFCVLIAALYPEYIYTVLKYPVQMSLPSLTAHLHQDVIHAVVNNTHKMPPDHLPEQVKAFCITPTQWPAMQLNKLFWENKLVQQLCQVGPQKSTPPLGKLWLYAMATLVFPQDMLQCLWLELKPQYAETYASVSELVQTLFQIFTQQCEMVTEGYTQPQLPTGEPVLQMIRVRRQDTTTTDTNTTTEPGLLDVFIQTETALDYALGSWLFGIPVCLGVHVADLLKGQRVLVARHLEYTSRDRDFLRIQRSRDLNLSQLLQDTWTETPLEHCWLQAQIRRLRDYLRFPTRLEFIPLVIYNAQDHTVVRVLRPPSTFEQDHSRLVLDEAFPIFPLYDQDDNSSADNVAASGAAPTPPVPFNRVPVNIQFLRENPPPIARVQQPPRRHRHRAAAAADDDGQIDHVQDDTSRTADSALVSTAFGGSVFQENRLGETPLCRDELVAVAPGAASTSFASPPITVLTQNVLSALEILRLVRLNLRQLAQSVQDTIQHMRFLYLL.

A deubiquitination activity region spans residues 1–238 (MKVTQASCHQ…IDLTGVVRES (238 aa)). A Peptidase C76 domain is found at 4–226 (TQASCHQGDI…AARLVSTYRD (223 aa)). Catalysis depends on residues cysteine 24, aspartate 160, and histidine 162. The segment at 239–318 (ADTAATTTTA…KTLATASSSS (80 aa)) is disordered. Residues 240–250 (DTAATTTTAAP) show a composition bias toward low complexity. The segment covering 251-268 (SLPPLPDPIVDPGCPPGV) has biased composition (pro residues). The span at 304-318 (PSTTSKTLATASSSS) shows a compositional bias: low complexity. The segment at 328 to 332 (SSAVP) is interaction with inner tegument protein. A compositionally biased stretch (polar residues) spans 1173–1190 (SQQKMEGQLQETRQQMTE). Residues 1173–1229 (SQQKMEGQLQETRQQMTETSERLDRSLRQDPGSSSVTRVPEKPFKGQELAGRITPPP) form a disordered region. The span at 1191–1200 (TSERLDRSLR) shows a compositional bias: basic and acidic residues.

Belongs to the herpesviridae large tegument protein family. As to quaternary structure, interacts with host CUL1 and CUL4A; these interactions inhibit the E3 ligase activity of cullins. Interacts with inner tegument protein. Interacts with capsid vertex specific component CVC2. Interacts with the major capsid protein/MCP.

It is found in the virion tegument. Its subcellular location is the host cytoplasm. The protein resides in the host nucleus. The enzyme catalyses Thiol-dependent hydrolysis of ester, thioester, amide, peptide and isopeptide bonds formed by the C-terminal Gly of ubiquitin (a 76-residue protein attached to proteins as an intracellular targeting signal).. Large tegument protein that plays multiple roles in the viral cycle. During viral entry, remains associated with the capsid while most of the tegument is detached and participates in the capsid transport toward the host nucleus. Plays a role in the routing of the capsid at the nuclear pore complex and subsequent uncoating. Within the host nucleus, acts as a deneddylase and promotes the degradation of nuclear CRLs (cullin-RING ubiquitin ligases) and thereby stabilizes nuclear CRL substrates, while cytoplasmic CRLs remain unaffected. These modifications prevent host cell cycle S-phase progression and create a favorable environment allowing efficient viral genome replication. Participates later in the secondary envelopment of capsids. Indeed, plays a linker role for the association of the outer viral tegument to the capsids together with the inner tegument protein. This Homo sapiens (Human) protein is Large tegument protein deneddylase.